The sequence spans 461 residues: Phosphoglycerate kinase, chloroplastic (461 aa).

A chloroplast-targeting transit peptide spans 1-60 (MALSMKMRANARVSGRRVAAVAPRVVPFSSASSSVLRSGFALRCLWTSAAWAALASVVEA). Positions 82, 83, 85, 100, 122, 123, 125, 126, 182, 214, and 215 each coordinate (2R)-3-phosphoglycerate. An ADP-binding site is contributed by Gly260. Residue Gly260 coordinates CDP. Residues Lys262 and Lys266 each coordinate AMP. ATP is bound at residue Lys266. Residue Gly284 coordinates ADP. Gly284 lines the CDP pocket. Gly285 and Gly357 together coordinate AMP. ATP contacts are provided by Gly285 and Gly357. CDP contacts are provided by Gly382 and Phe387. Position 387 (Phe387) interacts with ADP. Glu388 is an AMP binding site. Glu388, Asp419, and Ser420 together coordinate ATP. Residue Asp419 participates in Mg(2+) binding.

Belongs to the phosphoglycerate kinase family. Monomer. Mg(2+) is required as a cofactor.

The protein localises to the plastid. It is found in the chloroplast. It catalyses the reaction (2R)-3-phosphoglycerate + ATP = (2R)-3-phospho-glyceroyl phosphate + ADP. Its pathway is carbohydrate biosynthesis; Calvin cycle. This chain is Phosphoglycerate kinase, chloroplastic, found in Chlamydomonas reinhardtii (Chlamydomonas smithii).